Consider the following 349-residue polypeptide: Mannonate dehydratase (349 aa).

Belongs to the mannonate dehydratase family. The cofactor is Fe(2+). Mn(2+) serves as cofactor.

The catalysed reaction is D-mannonate = 2-dehydro-3-deoxy-D-gluconate + H2O. It functions in the pathway carbohydrate metabolism; pentose and glucuronate interconversion. In terms of biological role, catalyzes the dehydration of D-mannonate. The polypeptide is Mannonate dehydratase (Oceanobacillus iheyensis (strain DSM 14371 / CIP 107618 / JCM 11309 / KCTC 3954 / HTE831)).